The sequence spans 123 residues: Large ribosomal subunit protein uL14 (123 aa).

Belongs to the universal ribosomal protein uL14 family. As to quaternary structure, part of the 50S ribosomal subunit. Forms a cluster with proteins L3 and L19. In the 70S ribosome, L14 and L19 interact and together make contacts with the 16S rRNA in bridges B5 and B8.

Binds to 23S rRNA. Forms part of two intersubunit bridges in the 70S ribosome. The polypeptide is Large ribosomal subunit protein uL14 (Corynebacterium urealyticum (strain ATCC 43042 / DSM 7109)).